Here is a 368-residue protein sequence, read N- to C-terminus: DNA replication and repair protein RecF (368 aa).

30-37 (GRNGSGKT) contacts ATP.

This sequence belongs to the RecF family.

It is found in the cytoplasm. The RecF protein is involved in DNA metabolism; it is required for DNA replication and normal SOS inducibility. RecF binds preferentially to single-stranded, linear DNA. It also seems to bind ATP. The protein is DNA replication and repair protein RecF of Chlorobaculum parvum (strain DSM 263 / NCIMB 8327) (Chlorobium vibrioforme subsp. thiosulfatophilum).